Here is a 403-residue protein sequence, read N- to C-terminus: Nucleolar protein 13 (403 aa).

2 stretches are compositionally biased toward basic and acidic residues: residues Met-1–Glu-35 and Lys-75–Gln-97. Disordered stretches follow at residues Met-1–Lys-43 and Ile-72–Lys-116. The residue at position 2 (Ser-2) is an N-acetylserine. The residue at position 2 (Ser-2) is a Phosphoserine. A compositionally biased stretch (polar residues) spans Glu-99–Gly-108. Thr-105 carries the phosphothreonine modification. 2 RRM domains span residues Tyr-125–Asn-219 and Arg-239–Asp-317. Over residues Glu-313–Asn-329 the composition is skewed to basic and acidic residues. The segment at Glu-313–Asp-403 is disordered. A compositionally biased stretch (polar residues) spans Val-330–Lys-344. The residue at position 335 (Ser-335) is a Phosphoserine. Basic and acidic residues predominate over residues Gly-345–Arg-361. Over residues Asp-371–Ala-381 the composition is skewed to polar residues.

It localises to the nucleus. Its subcellular location is the nucleolus. The polypeptide is Nucleolar protein 13 (NOP13) (Saccharomyces cerevisiae (strain ATCC 204508 / S288c) (Baker's yeast)).